A 354-amino-acid chain; its full sequence is Caffeic acid 3-O-methyltransferase (354 aa).

121–127 (MNQDKVL) is a substrate binding site. Residues 153 to 171 (AFEYHGKDQRFNKVFNSGM) are substrate binding. S-adenosyl-L-methionine contacts are provided by glycine 199, aspartate 222, aspartate 242, methionine 243, and lysine 256. The Proton acceptor role is filled by histidine 260.

The protein belongs to the class I-like SAM-binding methyltransferase superfamily. Cation-independent O-methyltransferase family. COMT subfamily. In terms of assembly, homodimer.

The catalysed reaction is (E)-caffeate + S-adenosyl-L-methionine = (E)-ferulate + S-adenosyl-L-homocysteine + H(+). Its pathway is aromatic compound metabolism; phenylpropanoid biosynthesis. Functionally, catalyzes the conversion of caffeic acid to ferulic acid and of 5-hydroxyferulic acid to sinapic acid. The resulting products may subsequently be converted to the corresponding alcohols that are incorporated into lignins. This Zinnia elegans (Garden zinnia) protein is Caffeic acid 3-O-methyltransferase.